The primary structure comprises 499 residues: Probable cytosol aminopeptidase (499 aa).

2 residues coordinate Mn(2+): K263 and D268. The active site involves K275. 3 residues coordinate Mn(2+): D286, D345, and E347. R349 is an active-site residue.

Belongs to the peptidase M17 family. Requires Mn(2+) as cofactor.

Its subcellular location is the cytoplasm. It catalyses the reaction Release of an N-terminal amino acid, Xaa-|-Yaa-, in which Xaa is preferably Leu, but may be other amino acids including Pro although not Arg or Lys, and Yaa may be Pro. Amino acid amides and methyl esters are also readily hydrolyzed, but rates on arylamides are exceedingly low.. The enzyme catalyses Release of an N-terminal amino acid, preferentially leucine, but not glutamic or aspartic acids.. In terms of biological role, presumably involved in the processing and regular turnover of intracellular proteins. Catalyzes the removal of unsubstituted N-terminal amino acids from various peptides. This chain is Probable cytosol aminopeptidase (pepA), found in Chlamydia trachomatis serovar D (strain ATCC VR-885 / DSM 19411 / UW-3/Cx).